The chain runs to 348 residues: Protein RecA (348 aa).

67–74 (GPESSGKT) is an ATP binding site.

The protein belongs to the RecA family.

The protein resides in the cytoplasm. Can catalyze the hydrolysis of ATP in the presence of single-stranded DNA, the ATP-dependent uptake of single-stranded DNA by duplex DNA, and the ATP-dependent hybridization of homologous single-stranded DNAs. It interacts with LexA causing its activation and leading to its autocatalytic cleavage. This is Protein RecA from Cutibacterium acnes (Propionibacterium acnes).